The chain runs to 527 residues: Catalase (527 aa).

The residue at position 2 (Ala2) is an N-acetylalanine. Phosphoserine is present on Ser9. Active-site residues include His75 and Asn148. 4 residues coordinate NADP(+): His194, Ser201, Arg203, and Asn213. An N6-succinyllysine modification is found at Lys221. The residue at position 233 (Lys233) is an N6-acetyllysine. NADP(+) is bound by residues Lys237, Trp303, His305, and Lys306. The residue at position 306 (Lys306) is an N6-acetyllysine; alternate. The residue at position 306 (Lys306) is an N6-succinyllysine; alternate. Position 358 (Tyr358) interacts with heme. 2 positions are modified to phosphoserine: Ser417 and Ser422. Lys480 is subject to N6-acetyllysine; alternate. N6-succinyllysine; alternate is present on Lys480. Lys499 carries the N6-acetyllysine modification. Thr511 is subject to Phosphothreonine. Residues Ser515 and Ser517 each carry the phosphoserine modification. The short motif at 524–527 is the Microbody targeting signal; atypical element; sequence KANL.

It belongs to the catalase family. As to quaternary structure, homotetramer. Interacts (via microbody targeting signal) with PEX5, monomeric form interacts with PEX5, leading to its translocation into peroxisomes. Heme is required as a cofactor. Requires NADP(+) as cofactor.

It localises to the peroxisome matrix. It catalyses the reaction 2 H2O2 = O2 + 2 H2O. Its function is as follows. Catalyzes the degradation of hydrogen peroxide (H(2)O(2)) generated by peroxisomal oxidases to water and oxygen, thereby protecting cells from the toxic effects of hydrogen peroxide. Promotes growth of cells including T-cells, B-cells, myeloid leukemia cells, melanoma cells, mastocytoma cells and normal and transformed fibroblast cells. In Homo sapiens (Human), this protein is Catalase (CAT).